Consider the following 313-residue polypeptide: Mitochondrial uncoupling protein 4 (313 aa).

Solcar repeat units lie at residues 4-115 (KSFV…LKNK), 124-215 (LNLS…FKEG), and 224-309 (DGLG…VRKL). 6 helical membrane passes run 6-26 (FVEGGIASVIAGCSTHPLDLI), 84-104 (AAALFSGVSATLLRQTLYSTT), 130-150 (IGAGLVAGGIGAAVGNPADVA), 189-209 (RGSALTINRAMIVTAAQLASY), 230-250 (VVASFAAGFVASVASNPVDVI), and 282-302 (YKGFVPTVCRQGPFTVVLFVT).

The protein belongs to the mitochondrial carrier (TC 2.A.29) family. As to expression, expressed in roots, leaves, stems and flowers.

The protein resides in the mitochondrion inner membrane. PUMPS are mitochondrial transporter proteins that create proton leaks across the inner mitochondrial membrane, thus uncoupling oxidative phosphorylation. This leads to a decrease in the efficiency of oxidative phosphorylation and an increase in heat production. May be involved in protecting plant cells against oxidative stress damage. Recombinant PUMP4, reconstituted into liposomes, transports a wide range of dicarboxylic acids including malate, oxaloacetate and succinate as well as phosphate, sulfate and thiosulfate. However, it is unknown if these transports are of any biological significance in vivo. This chain is Mitochondrial uncoupling protein 4 (PUMP4), found in Arabidopsis thaliana (Mouse-ear cress).